Reading from the N-terminus, the 248-residue chain is Metallo-beta-lactamase type 2 (248 aa).

The signal sequence occupies residues 1–21; it reads MKGLKGLLVLALGFTGLQVFG. Zn(2+) is bound by residues His97, His99, Asp101, His160, and Cys179. Residue Lys182 coordinates substrate. His221 contributes to the Zn(2+) binding site.

It belongs to the metallo-beta-lactamase superfamily. Class-B beta-lactamase family. In terms of assembly, monomer. The cofactor is Zn(2+).

It localises to the periplasm. It catalyses the reaction a beta-lactam + H2O = a substituted beta-amino acid. Its function is as follows. Confers resistance to the different beta-lactams antibiotics (penicillin, cephalosporin and carbapenem) via the hydrolysis of the beta-lactam ring. The chain is Metallo-beta-lactamase type 2 (blaB7) from Elizabethkingia meningoseptica (Chryseobacterium meningosepticum).